We begin with the raw amino-acid sequence, 98 residues long: NADH-ubiquinone oxidoreductase chain 4L (98 aa).

Helical transmembrane passes span Leu-2–Phe-22, Ser-29–Leu-49, and Ile-61–Val-81.

Belongs to the complex I subunit 4L family. As to quaternary structure, core subunit of respiratory chain NADH dehydrogenase (Complex I) which is composed of 45 different subunits.

The protein resides in the mitochondrion inner membrane. The enzyme catalyses a ubiquinone + NADH + 5 H(+)(in) = a ubiquinol + NAD(+) + 4 H(+)(out). Functionally, core subunit of the mitochondrial membrane respiratory chain NADH dehydrogenase (Complex I) which catalyzes electron transfer from NADH through the respiratory chain, using ubiquinone as an electron acceptor. Part of the enzyme membrane arm which is embedded in the lipid bilayer and involved in proton translocation. The polypeptide is NADH-ubiquinone oxidoreductase chain 4L (MT-ND4L) (Microcebus ravelobensis (Golden-brown mouse lemur)).